The primary structure comprises 279 residues: Large ribosomal subunit protein uL2 (279 aa).

Positions 223–279 (PVAMNPVDHPMGGGEGRASGGHPRSRKGLPAKGFKTRSRTKASNKYIVERRKTRKKK) are disordered. The segment covering 245 to 264 (PRSRKGLPAKGFKTRSRTKA) has biased composition (basic residues).

The protein belongs to the universal ribosomal protein uL2 family. As to quaternary structure, part of the 50S ribosomal subunit. Forms a bridge to the 30S subunit in the 70S ribosome.

One of the primary rRNA binding proteins. Required for association of the 30S and 50S subunits to form the 70S ribosome, for tRNA binding and peptide bond formation. It has been suggested to have peptidyltransferase activity; this is somewhat controversial. Makes several contacts with the 16S rRNA in the 70S ribosome. The sequence is that of Large ribosomal subunit protein uL2 from Christiangramia forsetii (strain DSM 17595 / CGMCC 1.15422 / KT0803) (Gramella forsetii).